The primary structure comprises 519 residues: Serine/threonine-protein kinase RIO3 (519 aa).

Serine 8 and serine 112 each carry phosphoserine. The disordered stretch occupies residues 121-159 (PYEDSDSSEDEVDWQDTRDDPYRPAKPVPTPKKGFIGKG). Tyrosine 122 carries the post-translational modification Phosphotyrosine. Acidic residues predominate over residues 124-134 (DSDSSEDEVDW). 3 positions are modified to phosphoserine: serine 125, serine 127, and serine 128. In terms of domain architecture, Protein kinase spans 251 to 519 (ETITGCISTG…DGDPPLLYDE (269 aa)). ATP contacts are provided by residues 257-265 (ISTGKESVV) and lysine 290. Aspartate 406 (proton acceptor) is an active-site residue.

It belongs to the protein kinase superfamily. RIO-type Ser/Thr kinase family. In terms of assembly, interacts with CASP10. Interacts with IRF3; RIOK3 probably mediates the interaction of TBK1 with IRF3. Associated with 40S pre-ribosomal particles. Mg(2+) serves as cofactor. Autophosphorylated (in vitro). In terms of tissue distribution, widely expressed.

Its subcellular location is the cytoplasm. It catalyses the reaction L-seryl-[protein] + ATP = O-phospho-L-seryl-[protein] + ADP + H(+). The enzyme catalyses L-threonyl-[protein] + ATP = O-phospho-L-threonyl-[protein] + ADP + H(+). Its function is as follows. Involved in regulation of type I interferon (IFN)-dependent immune response which plays a critical role in the innate immune response against DNA and RNA viruses. May act as an adapter protein essential for the recruitment of TBK1 to IRF3. Phosphorylates IFIH1 on 'Ser-828' interfering with IFIH1 filament assembly on long dsRNA and resulting in attenuated IFIH1-signaling. Can inhibit CASP10 isoform 7-mediated activation of the NF-kappaB signaling pathway. May play a role in the biogenesis of the 40S ribosomal subunit. Involved in the processing of 21S pre-rRNA to the mature 18S rRNA. The polypeptide is Serine/threonine-protein kinase RIO3 (RIOK3) (Homo sapiens (Human)).